An 89-amino-acid chain; its full sequence is Acylphosphatase (89 aa).

Residues 3–89 (HIHLQVFGRV…NQKLSDFRSI (87 aa)) enclose the Acylphosphatase-like domain. Active-site residues include R18 and N36.

The protein belongs to the acylphosphatase family.

The catalysed reaction is an acyl phosphate + H2O = a carboxylate + phosphate + H(+). This chain is Acylphosphatase (acyP), found in Staphylococcus aureus (strain Mu3 / ATCC 700698).